The primary structure comprises 1029 residues: Translation initiation factor IF-2 (1029 aa).

The segment at Arg73 to Glu441 is disordered. Composition is skewed to acidic residues over residues Thr106 to Glu121 and Ala148 to Glu177. Over residues Ala183–Lys196 the composition is skewed to basic and acidic residues. 3 stretches are compositionally biased toward acidic residues: residues Thr213 to Ala234, Thr242 to Val258, and Ala279 to Gly322. Over residues Lys358–Asp372 the composition is skewed to basic and acidic residues. Over residues Lys373–Lys386 the composition is skewed to basic residues. Low complexity predominate over residues Gln400–Gln411. Basic residues predominate over residues Arg417–Arg427. A compositionally biased stretch (basic and acidic residues) spans His428–Glu441. The 173-residue stretch at Pro524 to Lys696 folds into the tr-type G domain. The G1 stretch occupies residues Gly533–Thr540. Gly533–Thr540 lines the GTP pocket. Positions Gly558–His562 are G2. Residues Asp582–Gly585 form a G3 region. GTP is bound by residues Asp582 to His586 and Asn636 to Asp639. The interval Asn636–Asp639 is G4. Positions Ser672–Lys674 are G5.

Belongs to the TRAFAC class translation factor GTPase superfamily. Classic translation factor GTPase family. IF-2 subfamily.

Its subcellular location is the cytoplasm. Its function is as follows. One of the essential components for the initiation of protein synthesis. Protects formylmethionyl-tRNA from spontaneous hydrolysis and promotes its binding to the 30S ribosomal subunits. Also involved in the hydrolysis of GTP during the formation of the 70S ribosomal complex. In Salinibacter ruber (strain DSM 13855 / M31), this protein is Translation initiation factor IF-2.